Reading from the N-terminus, the 506-residue chain is Histidine--tRNA ligase, mitochondrial (506 aa).

The N-terminal 33 residues, 1–33 (MPQLGLLPGRAWTVLLGLLRPPPGALCIRAVRS), are a transit peptide targeting the mitochondrion. Phosphoserine is present on Ser-67. L-histidine is bound by residues 131 to 133 (DLT), Arg-158, Gln-174, Asp-178, Arg-327, and 331 to 332 (YY). An N6-acetyllysine modification is found at Lys-444.

This sequence belongs to the class-II aminoacyl-tRNA synthetase family. In terms of assembly, homodimer.

The protein localises to the mitochondrion. The enzyme catalyses tRNA(His) + L-histidine + ATP = L-histidyl-tRNA(His) + AMP + diphosphate + H(+). Its function is as follows. Mitochondrial aminoacyl-tRNA synthetase that catalyzes the ATP-dependent ligation of histidine to the 3'-end of its cognate tRNA, via the formation of an aminoacyl-adenylate intermediate (His-AMP). The chain is Histidine--tRNA ligase, mitochondrial (HARS2) from Bos taurus (Bovine).